We begin with the raw amino-acid sequence, 167 residues long: Phosphorelay intermediate protein YPD1 (167 aa).

The HPt domain occupies 24 to 129 (DSDFSKGLII…DDEEIKIQVD (106 aa)). His64 bears the Phosphohistidine mark.

This sequence belongs to the YPD1 family. As to quaternary structure, interacts with the response regulatory domains of SLN1 and SSK1. In terms of processing, the phosphorelay mechanism involves the sequential transfer of a phosphate group from 'His-576' (H1) to 'Asp-1144' (D1) of SLN1, then to His-64 (H2) of YPD1 and finally to 'Asp-554' (D2) of SSK1 or 'Asp-427' (D2) of SKN7.

The protein localises to the cytoplasm. It localises to the nucleus. Its function is as follows. Phosphorelay intermediate protein that is part of the branched SLN1-YPD1-SKN7/SSK1 two-component regulatory system, which controls activity of the HOG1 pathway and gene expression in response to changes in the osmolarity of the extracellular environment. Catalyzes the phosphoryl group transfer from the membrane-bound osmosensing histidine kinase SLN1 to two distinct response regulator proteins, SSK1 in the cytoplasm, and transcription factor SKN7 in the nucleus. This is Phosphorelay intermediate protein YPD1 (YPD1) from Saccharomyces cerevisiae (strain ATCC 204508 / S288c) (Baker's yeast).